The following is a 270-amino-acid chain: Formamidopyrimidine-DNA glycosylase (270 aa).

Pro2 acts as the Schiff-base intermediate with DNA in catalysis. Glu3 acts as the Proton donor in catalysis. Lys58 serves as the catalytic Proton donor; for beta-elimination activity. Residues His91, Arg110, and Arg151 each contribute to the DNA site. An FPG-type zinc finger spans residues 236–270 (RVYDREDAPCRRCATPIRRIVQAQRASFYCPTCQR). Catalysis depends on Arg260, which acts as the Proton donor; for delta-elimination activity.

This sequence belongs to the FPG family. In terms of assembly, monomer. The cofactor is Zn(2+).

The catalysed reaction is Hydrolysis of DNA containing ring-opened 7-methylguanine residues, releasing 2,6-diamino-4-hydroxy-5-(N-methyl)formamidopyrimidine.. It carries out the reaction 2'-deoxyribonucleotide-(2'-deoxyribose 5'-phosphate)-2'-deoxyribonucleotide-DNA = a 3'-end 2'-deoxyribonucleotide-(2,3-dehydro-2,3-deoxyribose 5'-phosphate)-DNA + a 5'-end 5'-phospho-2'-deoxyribonucleoside-DNA + H(+). In terms of biological role, involved in base excision repair of DNA damaged by oxidation or by mutagenic agents. Acts as a DNA glycosylase that recognizes and removes damaged bases. Has a preference for oxidized purines, such as 7,8-dihydro-8-oxoguanine (8-oxoG). Has AP (apurinic/apyrimidinic) lyase activity and introduces nicks in the DNA strand. Cleaves the DNA backbone by beta-delta elimination to generate a single-strand break at the site of the removed base with both 3'- and 5'-phosphates. The polypeptide is Formamidopyrimidine-DNA glycosylase (Thiobacillus denitrificans (strain ATCC 25259 / T1)).